The following is an 89-amino-acid chain: Small ribosomal subunit protein uS15 (89 aa).

It belongs to the universal ribosomal protein uS15 family. Part of the 30S ribosomal subunit. Forms a bridge to the 50S subunit in the 70S ribosome, contacting the 23S rRNA.

Its function is as follows. One of the primary rRNA binding proteins, it binds directly to 16S rRNA where it helps nucleate assembly of the platform of the 30S subunit by binding and bridging several RNA helices of the 16S rRNA. In terms of biological role, forms an intersubunit bridge (bridge B4) with the 23S rRNA of the 50S subunit in the ribosome. The chain is Small ribosomal subunit protein uS15 from Aliivibrio fischeri (strain ATCC 700601 / ES114) (Vibrio fischeri).